A 159-amino-acid polypeptide reads, in one-letter code: Putative pre-16S rRNA nuclease (159 aa).

This sequence belongs to the YqgF nuclease family.

Its subcellular location is the cytoplasm. In terms of biological role, could be a nuclease involved in processing of the 5'-end of pre-16S rRNA. The sequence is that of Putative pre-16S rRNA nuclease from Bartonella quintana (strain Toulouse) (Rochalimaea quintana).